The primary structure comprises 632 residues: Galactan 5-O-arabinofuranosyltransferase (632 aa).

13 helical membrane passes run 10-30 (QIVL…IAIA), 45-65 (ALTT…GGVW), 76-96 (LGGL…PLGA), 162-182 (WAIT…WQMI), 184-204 (FEYA…YSSP), 206-226 (PYAA…WSGL), 242-259 (GWAT…AATW), 263-282 (LLAY…ATAL), 298-318 (LAGI…PFLA), 344-364 (FPML…LWLI), 375-395 (ALMI…LTTL), 409-429 (LTVL…QSLA), and 434-454 (AVLS…SQDI). Residues 455–632 (PNVLRPDLTI…LAIRKPMGNA (178 aa)) lie on the Extracellular side of the membrane.

The protein belongs to the glycosyltransferase 85 family.

Its subcellular location is the cell membrane. It catalyses the reaction Adds an alpha-D-arabinofuranosyl group from trans,octacis-decaprenylphospho-beta-D-arabinofuranose at the 5-O-position of the eighth, tenth and twelfth galactofuranose unit of the galactofuranan chain of [beta-D-galactofuranosyl-(1-&gt;5)-beta-D-galactofuranosyl-(1-&gt;6)]14-beta-D-galactofuranosyl-(1-&gt;5)-beta-D-galactofuranosyl-(1-&gt;4)-alpha-L-rhamnopyranosyl-(1-&gt;3)-N-acetyl-alpha-D-glucosaminyl-diphospho-trans,octacis-decaprenol.. It participates in cell wall biogenesis; cell wall polysaccharide biosynthesis. Involved in the biosynthesis of the arabinogalactan (AG) region of the mycolylarabinogalactan-peptidoglycan (mAGP) complex, an essential component of the mycobacterial cell wall. Catalyzes the addition of the first key arabinofuranosyl (Araf) residue from the sugar donor decaprenyl-phospho-arabinose (DPA) on the C-5 of a 6-linked galactofuranosyl (Galf) of the galactan domain, thus 'priming' the galactan for further elaboration by other arabinofuranosyltransferases. The chain is Galactan 5-O-arabinofuranosyltransferase from Mycobacterium leprae (strain TN).